A 219-amino-acid chain; its full sequence is Phosphatidylserine decarboxylase proenzyme (219 aa).

Ser188 (schiff-base intermediate with substrate; via pyruvic acid) is an active-site residue. Ser188 is subject to Pyruvic acid (Ser); by autocatalysis.

This sequence belongs to the phosphatidylserine decarboxylase family. PSD-A subfamily. Heterodimer of a large membrane-associated beta subunit and a small pyruvoyl-containing alpha subunit. Pyruvate serves as cofactor. Is synthesized initially as an inactive proenzyme. Formation of the active enzyme involves a self-maturation process in which the active site pyruvoyl group is generated from an internal serine residue via an autocatalytic post-translational modification. Two non-identical subunits are generated from the proenzyme in this reaction, and the pyruvate is formed at the N-terminus of the alpha chain, which is derived from the carboxyl end of the proenzyme. The post-translation cleavage follows an unusual pathway, termed non-hydrolytic serinolysis, in which the side chain hydroxyl group of the serine supplies its oxygen atom to form the C-terminus of the beta chain, while the remainder of the serine residue undergoes an oxidative deamination to produce ammonia and the pyruvoyl prosthetic group on the alpha chain.

The protein resides in the cell membrane. It carries out the reaction a 1,2-diacyl-sn-glycero-3-phospho-L-serine + H(+) = a 1,2-diacyl-sn-glycero-3-phosphoethanolamine + CO2. Its pathway is phospholipid metabolism; phosphatidylethanolamine biosynthesis; phosphatidylethanolamine from CDP-diacylglycerol: step 2/2. Catalyzes the formation of phosphatidylethanolamine (PtdEtn) from phosphatidylserine (PtdSer). In Citrifermentans bemidjiense (strain ATCC BAA-1014 / DSM 16622 / JCM 12645 / Bem) (Geobacter bemidjiensis), this protein is Phosphatidylserine decarboxylase proenzyme.